The following is a 325-amino-acid chain: Elongation factor P--(R)-beta-lysine ligase (325 aa).

76-78 (SPE) provides a ligand contact to substrate. ATP is bound by residues 100–102 (RNE) and N109. A substrate-binding site is contributed by Y118. Residue 244–245 (EL) participates in ATP binding. Residue E251 coordinates substrate. Residue G300 participates in ATP binding.

This sequence belongs to the class-II aminoacyl-tRNA synthetase family. EpmA subfamily. As to quaternary structure, homodimer.

It catalyses the reaction D-beta-lysine + L-lysyl-[protein] + ATP = N(6)-((3R)-3,6-diaminohexanoyl)-L-lysyl-[protein] + AMP + diphosphate + H(+). With EpmB is involved in the beta-lysylation step of the post-translational modification of translation elongation factor P (EF-P). Catalyzes the ATP-dependent activation of (R)-beta-lysine produced by EpmB, forming a lysyl-adenylate, from which the beta-lysyl moiety is then transferred to the epsilon-amino group of a conserved specific lysine residue in EF-P. This is Elongation factor P--(R)-beta-lysine ligase from Erwinia tasmaniensis (strain DSM 17950 / CFBP 7177 / CIP 109463 / NCPPB 4357 / Et1/99).